We begin with the raw amino-acid sequence, 57 residues long: UPF0391 membrane protein AZOSEA39630 (57 aa).

2 consecutive transmembrane segments (helical) span residues 4 to 24 and 37 to 57; these read WAII…TGVA and IALA…VLVF.

It belongs to the UPF0391 family.

The protein resides in the cell membrane. The polypeptide is UPF0391 membrane protein AZOSEA39630 (Aromatoleum aromaticum (strain DSM 19018 / LMG 30748 / EbN1) (Azoarcus sp. (strain EbN1))).